Here is an 804-residue protein sequence, read N- to C-terminus: Endoplasmin (804 aa).

The signal sequence occupies residues 1-21 (MRALWVLGLCCVLLTFGSVRA). The short motif at 42–44 (SRT) is the SRT pseudosubstrate motif element. Asn62 carries N-linked (GlcNAc...) asparagine glycosylation. Phosphoserine is present on Ser64. The N-linked (GlcNAc...) asparagine glycan is linked to Asn107. ATP-binding residues include Asn107, Asp149, and Asn162. Lys168 is subject to N6-(2-hydroxyisobutyryl)lysine. Residue Ser172 is modified to Phosphoserine. Phe199 is an ATP binding site. An N-linked (GlcNAc...) asparagine glycan is attached at Asn217. Position 288 is a phosphothreonine; by CK2 (Thr288). The interval 288-323 (TVEEPMEEEEAAKEEKEDSDDEAAVEEEEEEKKPKT) is disordered. Over residues 289 to 317 (VEEPMEEEEAAKEEKEDSDDEAAVEEEEE) the composition is skewed to acidic residues. Ser306 carries the post-translational modification Phosphoserine; by CK2. Ser403 carries the phosphoserine modification. Residue Lys404 is modified to N6-succinyllysine. The N-linked (GlcNAc...) asparagine glycan is linked to Asn445. Ser447 carries the post-translational modification Phosphoserine. Position 479 is an N6-acetyllysine (Lys479). N-linked (GlcNAc...) asparagine glycosylation is found at Asn481 and Asn502. Lys633 carries the N6-succinyllysine modification. The segment at 750 to 804 (DPDAKVEEEPEEEPEETTEDTTEDTEQDDEEEMDAGTDDEEQETVKKSTAEKDEL) is disordered. A compositionally biased stretch (acidic residues) spans 757 to 791 (EEPEEEPEETTEDTTEDTEQDDEEEMDAGTDDEEQ). Phosphothreonine; by CK2 occurs at positions 766, 770, 774, and 786. The span at 792–804 (ETVKKSTAEKDEL) shows a compositional bias: basic and acidic residues. A Prevents secretion from ER motif is present at residues 801-804 (KDEL).

This sequence belongs to the heat shock protein 90 family. In terms of assembly, homodimer; disulfide-linked. Component of an EIF2 complex at least composed of CELF1/CUGBP1, CALR, CALR3, EIF2S1, EIF2S2, HSP90B1 and HSPA5. Part of a large chaperone multiprotein complex comprising DNAJB11, HSP90B1, HSPA5, HYOU, PDIA2, PDIA4, PDIA6, PPIB, SDF2L1, UGGT1 and very small amounts of ERP29, but not, or at very low levels, CALR nor CANX. Interacts with AIMP1; regulates its retention in the endoplasmic reticulum. Hyperglycosylated form interacts with OS9; promoting its degradation by the endoplasmic reticulum associated degradation (ERAD). Interacts with CNPY3. This interaction is disrupted in the presence of ATP. Interacts with TLR4 and TLR9, but not with TLR3. Interacts with MZB1 in a calcium-dependent manner. Interacts with METTL23. Interacts with IL1B; the interaction facilitates cargo translocation into the ERGIC. Interacts with EIF2AK3. Post-translationally, phosphorylated by CK2. In terms of processing, N-glycosylated cotranslationally at Asn-217 by STT3A-containing OST-A complex: this glycosylation is constitutive. In response to various stress, 5 additional facultative sites (Asn-62, Asn-107, Asn-445, Asn-481 and Asn-502) can be glycosylated post-translationally by STT3B-containing OST-B complex, leading to a hyperglycosylated form that is degraded by the ER-associated degradation (ERAD) pathway. In normal conditions, the OST-A complex together with CCDC134 prevent glycosylation at facultative sites during protein folding, thereby preventing hyperglycosylation. Mechanistically, nascent HSP90B1 is tethered during translation to a specialized CCDC134-containing translocon that forms a microenvironment for its folding, in which STT3A associates with the SRT pseudosubstrate motif, and prevents access to facultative glycosylation sites until folding is completed, rendering its facultative sites inaccessible to the OST-B complex. As to expression, detected in heart muscle (at protein level).

The protein resides in the endoplasmic reticulum lumen. Its subcellular location is the sarcoplasmic reticulum lumen. It is found in the melanosome. It carries out the reaction ATP + H2O = ADP + phosphate + H(+). Its function is as follows. ATP-dependent chaperone involved in the processing of proteins in the endoplasmic reticulum, regulating their transport. Together with MESD, acts as a modulator of the Wnt pathway by promoting the folding of LRP6, a coreceptor of the canonical Wnt pathway. When associated with CNPY3, required for proper folding of Toll-like receptors. Promotes folding and trafficking of TLR4 to the cell surface. May participate in the unfolding of cytosolic leaderless cargos (lacking the secretion signal sequence) such as the interleukin 1/IL-1 to facilitate their translocation into the ERGIC (endoplasmic reticulum-Golgi intermediate compartment) and secretion; the translocation process is mediated by the cargo receptor TMED10. May also function in endoplasmic reticulum associated degradation (ERAD); it is however unclear whether it participates to ERAD or is a target of ERAD. This is Endoplasmin (HSP90B1) from Canis lupus familiaris (Dog).